The following is a 562-amino-acid chain: Arginine--tRNA ligase (562 aa).

The 'HIGH' region signature appears at 121-131; that stretch reads PNIAKPFSVGH.

Belongs to the class-I aminoacyl-tRNA synthetase family. As to quaternary structure, monomer.

Its subcellular location is the cytoplasm. It carries out the reaction tRNA(Arg) + L-arginine + ATP = L-arginyl-tRNA(Arg) + AMP + diphosphate. In Streptococcus uberis (strain ATCC BAA-854 / 0140J), this protein is Arginine--tRNA ligase.